Here is a 260-residue protein sequence, read N- to C-terminus: Kallikrein-8 (260 aa).

A signal peptide spans 1 to 28 (MGRPRPRAAKTWMFLLLLGGAWAGHSRA). A propeptide spanning residues 29 to 32 (QEDK) is cleaved from the precursor. Positions 33 to 257 (VLGGHECQPH…YLDWIKKIIG (225 aa)) constitute a Peptidase S1 domain. 6 disulfide bridges follow: Cys-39–Cys-173, Cys-58–Cys-74, Cys-145–Cys-246, Cys-152–Cys-218, Cys-184–Cys-198, and Cys-208–Cys-233. Catalysis depends on His-73, which acts as the Charge relay system. N-linked (GlcNAc...) asparagine glycosylation occurs at Asn-110. Asp-120 serves as the catalytic Charge relay system. Ser-212 acts as the Charge relay system in catalysis.

The protein belongs to the peptidase S1 family. Kallikrein subfamily. In terms of assembly, interacts with SPINK9. Isoform 1 is predominantly expressed in the pancreas. Isoform 2 is expressed in adult brain and hippocampus. Isoform 1 and isoform 2 are found in fetal brain and placenta. Detected in salivary gland, uterus, thymus, breast, testis and kidney but not in spleen, liver, lung or normal ovarian tissue. Displays an 11.5-fold increase in Alzheimer disease hippocampus compared to controls and is overexpressed in some ovarian carcinomas. Expressed at low levels in normal skin while high levels are found in psoriasis vulgaris, seborrheic keratosis, lichen planus and squamous cell carcinoma skin samples. Expressed in the keratinocytes.

Its subcellular location is the secreted. It is found in the cytoplasm. The enzyme catalyses Cleavage of amide substrates following the basic amino acids Arg or Lys at the P1 position, with a preference for Arg over Lys.. Inhibited by a range of serine protease inhibitors including antipain, aprotinin, leupeptin, benzamidine and soybean trypsin inhibitor. Its function is as follows. Serine protease which is capable of degrading a number of proteins such as casein, fibrinogen, kininogen, fibronectin and collagen type IV. Also cleaves L1CAM in response to increased neural activity. Induces neurite outgrowth and fasciculation of cultured hippocampal neurons. Plays a role in the formation and maturation of orphan and small synaptic boutons in the Schaffer-collateral pathway, regulates Schaffer-collateral long-term potentiation in the hippocampus and is required for memory acquisition and synaptic plasticity. Involved in skin desquamation and keratinocyte proliferation. Plays a role in the secondary phase of pathogenesis following spinal cord injury. The chain is Kallikrein-8 (KLK8) from Homo sapiens (Human).